The primary structure comprises 161 residues: MPSFDIVSEVDKQEVRNAIDQVNKEVSTRFDFKGSDARVEQSDYALTVYADTDFQLDQVQDILSQKLSKRGVDVKCLDTGNVEKVSGNKVKRSVTVKTGVGTELAKKIVKCIKDSKLKVQASIQGETVRVSGAKRDVLQETIALVKKSVSDFPLQYQNFRD.

This sequence belongs to the YajQ family.

Its function is as follows. Nucleotide-binding protein. This Thiobacillus denitrificans (strain ATCC 25259 / T1) protein is Nucleotide-binding protein Tbd_1846.